Consider the following 90-residue polypeptide: Putative septation protein SpoVG (90 aa).

This sequence belongs to the SpoVG family.

Its function is as follows. Could be involved in septation. In Clostridium perfringens (strain SM101 / Type A), this protein is Putative septation protein SpoVG.